The chain runs to 105 residues: Small ribosomal subunit protein eS25 (105 aa).

The protein belongs to the eukaryotic ribosomal protein eS25 family. As to quaternary structure, component of the small ribosomal subunit. Mature ribosomes consist of a small (40S) and a large (60S) subunit. The 40S subunit contains about 32 different proteins and 1 molecule of RNA (18S). The 60S subunit contains 45 different proteins and 3 molecules of RNA (25S, 5.8S and 5S).

The protein localises to the cytoplasm. Functionally, component of the ribosome, a large ribonucleoprotein complex responsible for the synthesis of proteins in the cell. The small ribosomal subunit (SSU) binds messenger RNAs (mRNAs) and translates the encoded message by selecting cognate aminoacyl-transfer RNA (tRNA) molecules. The large subunit (LSU) contains the ribosomal catalytic site termed the peptidyl transferase center (PTC), which catalyzes the formation of peptide bonds, thereby polymerizing the amino acids delivered by tRNAs into a polypeptide chain. The nascent polypeptides leave the ribosome through a tunnel in the LSU and interact with protein factors that function in enzymatic processing, targeting, and the membrane insertion of nascent chains at the exit of the ribosomal tunnel. The chain is Small ribosomal subunit protein eS25 (RPS25B) from Candida albicans (strain SC5314 / ATCC MYA-2876) (Yeast).